A 670-amino-acid chain; its full sequence is Small ribosomal subunit protein mS39 (670 aa).

The N-terminal 13 residues, 1–13, are a transit peptide targeting the mitochondrion; it reads MAAPCVRLGSVRC. 11 PPR repeats span residues 129–163, 164–199, 209–239, 240–274, 275–314, 315–351, 352–392, 396–430, 438–472, 473–507, and 556–590; these read VEGV…GTAP, SLET…EVQD, RPRQ…MPER, NAHS…RLTA, DVQT…NVRP, NLLT…NIEP, SLAT…FTLR, DVYF…DNRG, QSTY…LYYP, NSRG…GHSN, and SAGS…HRVP. The tract at residues 187-213 is disordered; it reads IQTSEQEQQEVQDQQETEDPKKRPRQY. Residues 193–203 are compositionally biased toward acidic residues; it reads EQQEVQDQQET. A disordered region spans residues 648–670; it reads EDLQKSHSSSSSSSSSSSDSDRE. Over residues 653-670 the composition is skewed to low complexity; sequence SHSSSSSSSSSSSDSDRE.

This sequence belongs to the mitochondrion-specific ribosomal protein mS39 family.

The protein resides in the mitochondrion. In terms of biological role, mitochondrial protein that may have a role in mitochondrial translation. The sequence is that of Small ribosomal subunit protein mS39 (ptcd3) from Xenopus tropicalis (Western clawed frog).